Consider the following 572-residue polypeptide: Phosphoenolpyruvate-protein phosphotransferase (572 aa).

The Tele-phosphohistidine intermediate role is filled by H191. Phosphoenolpyruvate contacts are provided by R298 and R334. E433 and D457 together coordinate Mg(2+). Phosphoenolpyruvate-binding positions include 456–457 (ND) and R467. The active-site Proton donor is the C504.

It belongs to the PEP-utilizing enzyme family. In terms of assembly, homodimer. Mg(2+) is required as a cofactor.

Its subcellular location is the cytoplasm. It carries out the reaction L-histidyl-[protein] + phosphoenolpyruvate = N(pros)-phospho-L-histidyl-[protein] + pyruvate. In terms of biological role, general (non sugar-specific) component of the phosphoenolpyruvate-dependent sugar phosphotransferase system (sugar PTS). This major carbohydrate active-transport system catalyzes the phosphorylation of incoming sugar substrates concomitantly with their translocation across the cell membrane. Enzyme I transfers the phosphoryl group from phosphoenolpyruvate (PEP) to the phosphoryl carrier protein (HPr). This Staphylococcus aureus (strain Mu50 / ATCC 700699) protein is Phosphoenolpyruvate-protein phosphotransferase (ptsI).